We begin with the raw amino-acid sequence, 208 residues long: Cytidylate kinase (208 aa).

7 to 15 (GPAASGKGT) is an ATP binding site.

Belongs to the cytidylate kinase family. Type 1 subfamily.

The protein resides in the cytoplasm. It carries out the reaction CMP + ATP = CDP + ADP. The catalysed reaction is dCMP + ATP = dCDP + ADP. The chain is Cytidylate kinase from Xanthobacter autotrophicus (strain ATCC BAA-1158 / Py2).